Reading from the N-terminus, the 34-residue chain is Hemopexin (34 aa).

The disordered stretch occupies residues 1–25 (RPLTQHKPHTPGDEHPHGAEPPGXD).

The protein belongs to the hemopexin family. As to expression, expressed by the liver and secreted in plasma.

The protein localises to the secreted. Functionally, binds heme and transports it to the liver for breakdown and iron recovery, after which the free hemopexin returns to the circulation. The chain is Hemopexin (HPX) from Gallus gallus (Chicken).